The following is a 138-amino-acid chain: Large ribosomal subunit protein uL16 (138 aa).

Basic residues predominate over residues 1 to 13 (MLQPARRKYRKEQ). The segment at 1-20 (MLQPARRKYRKEQKGRNTGV) is disordered.

Belongs to the universal ribosomal protein uL16 family. Part of the 50S ribosomal subunit.

In terms of biological role, binds 23S rRNA and is also seen to make contacts with the A and possibly P site tRNAs. The chain is Large ribosomal subunit protein uL16 from Verminephrobacter eiseniae (strain EF01-2).